We begin with the raw amino-acid sequence, 325 residues long: Apoptosis-enhancing nuclease (325 aa).

Positions 27–35 match the Nucleolar localization signal motif; that stretch reads RKRHKRRSR. The tract at residues 53–105 is disordered; that stretch reads LSMPPEPGSSPLPTPFGAVTATEDASSGKQCPRAGSGGAPCSRRPAPGKASGP. Residues 56–66 show a composition bias toward pro residues; the sequence is PPEPGSSPLPT. Positions 110–266 constitute an Exonuclease domain; sequence CVAIDCEMVG…EDATTAMELY (157 aa). The short motif at 165–188 is the Nuclear localization signal element; that stretch reads RQHMCKAIPFQVAQKEILKLLKGK. Positions 281–325 are disordered; it reads LWTCPEDREPDSSTDMEQYMEDQYWPDDLAHGSRGGAREAQDRRN. Residues 308–325 show a composition bias toward basic and acidic residues; that stretch reads DLAHGSRGGAREAQDRRN.

It localises to the nucleus. It is found in the nucleolus. Its function is as follows. Exonuclease with activity against single- and double-stranded DNA and RNA. Mediates p53-induced apoptosis. When induced by p53 following DNA damage, digests double-stranded DNA to form single-stranded DNA and amplifies DNA damage signals, leading to enhancement of apoptosis. This is Apoptosis-enhancing nuclease (AEN) from Pongo abelii (Sumatran orangutan).